We begin with the raw amino-acid sequence, 645 residues long: Cilia- and flagella-associated protein 221 homolog (645 aa).

The tract at residues 381–408 (GGAVHQPSAPVGSSSSGGGGGSDPAFKP) is disordered. The interval 428–435 (THQRLQRR) is interaction with calmodulin.

It belongs to the PCDP1 family. As to quaternary structure, interacts with calmodulin; calcium-dependent. Part of the PDCP1 complex composed of CFAP46, CFAP54, CFAP74 and CFAP221; the PDCP1 complex binds calmodulin.

Its subcellular location is the cytoplasm. The protein resides in the cytoskeleton. It is found in the cilium axoneme. In terms of biological role, may play a role in cilium morphogenesis. The polypeptide is Cilia- and flagella-associated protein 221 homolog (Chlamydomonas reinhardtii (Chlamydomonas smithii)).